A 188-amino-acid polypeptide reads, in one-letter code: Glutathione S-transferase 2 (188 aa).

The GST N-terminal domain maps to 2-79 (VHYKLMCFDV…FLARQYGYSG (78 aa)). Glutathione-binding positions include K43, 49-51 (GQL), and 63-64 (QS). Residues 81-188 (TPTEEMQVDS…PHLNVFIRKL (108 aa)) enclose the GST C-terminal domain.

This sequence belongs to the GST superfamily. Sigma family.

The enzyme catalyses RX + glutathione = an S-substituted glutathione + a halide anion + H(+). Functionally, conjugation of reduced glutathione to a wide number of exogenous and endogenous hydrophobic electrophiles. The protein is Glutathione S-transferase 2 (gst-2) of Caenorhabditis elegans.